The primary structure comprises 176 residues: MDLPGPIHDFLLVFLGSGLILGALGVVLFTNPIFSAFSLGLVLVCISLFYILANSHFVASAQLLIYVGAINVLIIFSVMFMSGPEYDKKFQLWTVGDGVTSLVCISLFVSLISTILNTSWYGIIWTTKSNQILEQDLINASQQIGIHLSTDFFLPFELISIILLVSLIGAIAVARQ.

The next 5 membrane-spanning stretches (helical) occupy residues 10-30 (FLLVFLGSGLILGALGVVLFT), 33-53 (IFSAFSLGLVLVCISLFYILA), 63-83 (LLIYVGAINVLIIFSVMFMSG), 105-125 (ISLFVSLISTILNTSWYGIIW), and 152-172 (FFLPFELISIILLVSLIGAIA).

This sequence belongs to the complex I subunit 6 family. As to quaternary structure, NDH is composed of at least 16 different subunits, 5 of which are encoded in the nucleus.

The protein resides in the plastid. Its subcellular location is the chloroplast thylakoid membrane. The enzyme catalyses a plastoquinone + NADH + (n+1) H(+)(in) = a plastoquinol + NAD(+) + n H(+)(out). The catalysed reaction is a plastoquinone + NADPH + (n+1) H(+)(in) = a plastoquinol + NADP(+) + n H(+)(out). NDH shuttles electrons from NAD(P)H:plastoquinone, via FMN and iron-sulfur (Fe-S) centers, to quinones in the photosynthetic chain and possibly in a chloroplast respiratory chain. The immediate electron acceptor for the enzyme in this species is believed to be plastoquinone. Couples the redox reaction to proton translocation, and thus conserves the redox energy in a proton gradient. The sequence is that of NAD(P)H-quinone oxidoreductase subunit 6, chloroplastic (ndhG) from Spinacia oleracea (Spinach).